A 149-amino-acid polypeptide reads, in one-letter code: Arginine repressor (149 aa).

Belongs to the ArgR family.

It localises to the cytoplasm. It functions in the pathway amino-acid biosynthesis; L-arginine biosynthesis [regulation]. Functionally, regulates arginine biosynthesis genes. The sequence is that of Arginine repressor from Bacillus cereus (strain ATCC 10987 / NRS 248).